A 116-amino-acid chain; its full sequence is Iron-sulfur cluster insertion protein ErpA (116 aa).

Iron-sulfur cluster contacts are provided by C44, C108, and C110.

This sequence belongs to the HesB/IscA family. In terms of assembly, homodimer. Iron-sulfur cluster serves as cofactor.

Functionally, required for insertion of 4Fe-4S clusters for at least IspG. This chain is Iron-sulfur cluster insertion protein ErpA, found in Pseudomonas aeruginosa (strain LESB58).